Consider the following 60-residue polypeptide: uncharacterized protein (60 aa).

This is an uncharacterized protein from Acidianus convivator (ATV).